A 536-amino-acid chain; its full sequence is Testis-specific expressed protein 55 (536 aa).

Positions 1 to 11 are enriched in low complexity; it reads MEEPPQEALAE. 2 disordered regions span residues 1–287 and 328–348; these read MEEP…PGTS and SNAD…QTDH. Over residues 35 to 52 the composition is skewed to basic and acidic residues; the sequence is QKNQAERKADNHTAHRIA. 2 stretches are compositionally biased toward polar residues: residues 62 to 85 and 105 to 136; these read QAES…STPG and QVNQ…QVSG. Basic and acidic residues-rich tracts occupy residues 138-158 and 173-222; these read TEER…ERRT and RGSR…ERRP. The span at 226 to 242 shows a compositional bias: low complexity; the sequence is IDSGSSVPSDQSPSVQI. Polar residues predominate over residues 243 to 255; the sequence is DSGSSVPSDQRPS. Over residues 339–348 the composition is skewed to basic and acidic residues; that stretch reads HYTESDQTDH.

In terms of tissue distribution, testis-specific.

Its subcellular location is the nucleus. It localises to the cell projection. The protein resides in the cilium. It is found in the flagellum. The sequence is that of Testis-specific expressed protein 55 from Homo sapiens (Human).